Consider the following 103-residue polypeptide: Large ribosomal subunit protein bL21 (103 aa).

Belongs to the bacterial ribosomal protein bL21 family. As to quaternary structure, part of the 50S ribosomal subunit. Contacts protein L20.

Functionally, this protein binds to 23S rRNA in the presence of protein L20. The protein is Large ribosomal subunit protein bL21 of Psychromonas ingrahamii (strain DSM 17664 / CCUG 51855 / 37).